We begin with the raw amino-acid sequence, 156 residues long: MGRFIFVSLGLLVLAFSLSGIGADQHCPSGWFSHNVSCYKLINDWKTWDEAQRFCMDEQENGQLASINDVGESVKLSDEFSKTWSIIDVWIGLRLSKRKSIWEWIDGSNVTQTRWEEGEPNNFLKKEFCVVLTSRSRYLKWNDKDCNRRHRFLCKF.

Residues 1 to 23 form the signal peptide; it reads MGRFIFVSLGLLVLAFSLSGIGA. 3 cysteine pairs are disulfide-bonded: C27–C38, C55–C154, and C129–C146. The region spanning 34–155 is the C-type lectin domain; that stretch reads HNVSCYKLIN…CNRRHRFLCK (122 aa). N35 and N109 each carry an N-linked (GlcNAc...) asparagine glycan. Residues 119 to 121 carry the Mannose-binding motif; the sequence is EPN. Ca(2+) is bound by residues E127, N142, and D143.

The protein belongs to the true venom lectin family. Expressed by the venom gland.

It localises to the secreted. Functionally, mannose-binding lectin which recognizes specific carbohydrate structures and agglutinates a variety of animal cells by binding to cell-surface glycoproteins and glycolipids. May be a calcium-dependent lectin. In Philodryas olfersii (Green snake), this protein is C-type lectin lectoxin-Phi2.